Reading from the N-terminus, the 280-residue chain is Tryptophan synthase alpha chain (280 aa).

Active-site proton acceptor residues include E49 and D60.

The protein belongs to the TrpA family. In terms of assembly, tetramer of two alpha and two beta chains.

The catalysed reaction is (1S,2R)-1-C-(indol-3-yl)glycerol 3-phosphate + L-serine = D-glyceraldehyde 3-phosphate + L-tryptophan + H2O. It participates in amino-acid biosynthesis; L-tryptophan biosynthesis; L-tryptophan from chorismate: step 5/5. Functionally, the alpha subunit is responsible for the aldol cleavage of indoleglycerol phosphate to indole and glyceraldehyde 3-phosphate. This is Tryptophan synthase alpha chain from Corynebacterium glutamicum (strain ATCC 13032 / DSM 20300 / JCM 1318 / BCRC 11384 / CCUG 27702 / LMG 3730 / NBRC 12168 / NCIMB 10025 / NRRL B-2784 / 534).